The chain runs to 1223 residues: A disintegrin and metalloproteinase with thrombospondin motifs 14 (1223 aa).

Residues 1–22 (MAPLRALLSYLLPLHCALCAAA) form the signal peptide. A propeptide spanning residues 23-252 (GSRTPELHLS…QLGDTERKRR (230 aa)) is cleaved from the precursor. N-linked (GlcNAc...) asparagine glycosylation is present at Asn109. Positions 259–460 (YSIEVLLVVD…PSYDCLLDDP (202 aa)) constitute a Peptidase M12B domain. Disulfide bonds link Cys336–Cys382, Cys376–Cys455, and Cys415–Cys441. His398 contributes to the Zn(2+) binding site. Residue Glu399 is part of the active site. The Zn(2+) site is built by His402 and His408. The 91-residue stretch at 461–551 (FDPAWPQPPE…WKSPEQTYGQ (91 aa)) folds into the Disintegrin domain. Asn475 is a glycosylation site (N-linked (GlcNAc...) asparagine). Disulfide bonds link Cys482–Cys507, Cys493–Cys516, Cys502–Cys535, Cys529–Cys540, Cys564–Cys601, Cys568–Cys606, and Cys579–Cys591. In terms of domain architecture, TSP type-1 1 spans 552 to 607 (DGGWSSWTKFGSCSRSCGGGVRSRSRSCNNPSPAYGGRLCLGPMFEYQVCNSEECP). The interval 730-846 (LKLVQIPAGA…GSNNVLLEEM (117 aa)) is spacer. 3 consecutive TSP type-1 domains span residues 847–907 (DTYE…HPCS), 908–967 (QPVW…LRVP), and 968–1022 (CPAQ…PACG). Asn941 carries an N-linked (GlcNAc...) asparagine glycan. 3 cysteine pairs are disulfide-bonded: Cys980-Cys1016, Cys984-Cys1021, and Cys995-Cys1005. Residue Asn1027 is glycosylated (N-linked (GlcNAc...) asparagine). The 39-residue stretch at 1059–1097 (STEPCTGDRSVFCQMEVLDRYCSIPGYHRLCCVSCIKKA) folds into the PLAC domain. Residues 1100–1223 (PNPGPDPGPT…TSLPAASPVT (124 aa)) form a disordered region. Pro residues predominate over residues 1101–1125 (NPGPDPGPTSLPPFSTPGSPLPGPQ). Basic and acidic residues predominate over residues 1199–1211 (PEDKGQPGEDLRH).

In terms of processing, the precursor is cleaved by a furin endopeptidase. Glycosylated. Can be O-fucosylated by POFUT2 on a serine or a threonine residue found within the consensus sequence C1-X(2)-(S/T)-C2-G of the TSP type-1 repeat domains where C1 and C2 are the first and second cysteine residue of the repeat, respectively. Fucosylated repeats can then be further glycosylated by the addition of a beta-1,3-glucose residue by the glucosyltransferase, B3GALTL. Fucosylation mediates the efficient secretion of ADAMTS family members. Can also be C-glycosylated with one or two mannose molecules on tryptophan residues within the consensus sequence W-X-X-W of the TPRs, and N-glycosylated. These other glycosylations can also facilitate secretion. As to expression, expressed in retina and at low levels in brain, lung and placenta. High expression in fetal tissues.

It is found in the secreted. It localises to the extracellular space. Its subcellular location is the extracellular matrix. Functionally, has aminoprocollagen type I processing activity in the absence of ADAMTS2. Seems to be synthesized as a latent enzyme that requires activation to display aminoprocollagen peptidase activity. Cleaves lysyl oxidase LOX at a site downstream of its propeptide cleavage site to produce a short LOX form. The polypeptide is A disintegrin and metalloproteinase with thrombospondin motifs 14 (ADAMTS14) (Homo sapiens (Human)).